The sequence spans 375 residues: 23S rRNA (uracil(747)-C(5))-methyltransferase RlmC (375 aa).

Residues C3, C11, C14, and C87 each coordinate [4Fe-4S] cluster. S-adenosyl-L-methionine-binding residues include Q212, F241, E262, and N307. The Nucleophile role is filled by C334.

It belongs to the class I-like SAM-binding methyltransferase superfamily. RNA M5U methyltransferase family. RlmC subfamily.

The enzyme catalyses uridine(747) in 23S rRNA + S-adenosyl-L-methionine = 5-methyluridine(747) in 23S rRNA + S-adenosyl-L-homocysteine + H(+). Functionally, catalyzes the formation of 5-methyl-uridine at position 747 (m5U747) in 23S rRNA. The protein is 23S rRNA (uracil(747)-C(5))-methyltransferase RlmC of Escherichia coli (strain SE11).